The sequence spans 243 residues: Adenine phosphoribosyltransferase 1, chloroplastic (243 aa).

A chloroplast-targeting transit peptide spans 1 to 52; the sequence is MQTIIISPLVSHRLCLARAVPCNRLLNNHHRAPPSIRLSNHRSTTSLRLFSS. Glutamine 2 is modified (N-acetylalanine).

This sequence belongs to the purine/pyrimidine phosphoribosyltransferase family. In terms of assembly, homodimer.

The protein localises to the plastid. The protein resides in the chloroplast. It is found in the cytoplasm. The catalysed reaction is AMP + diphosphate = 5-phospho-alpha-D-ribose 1-diphosphate + adenine. Its pathway is purine metabolism; AMP biosynthesis via salvage pathway; AMP from adenine: step 1/1. In terms of biological role, catalyzes a salvage reaction resulting in the formation of AMP, that is energically less costly than de novo synthesis. Contributes primarily to the recycling of adenine into adenylate nucleotides, but is also involved in the inactivation of cytokinins by phosphoribosylation. Catalyzes the conversion of cytokinins from free bases (active form) to the corresponding nucleotides (inactive form). This Arabidopsis thaliana (Mouse-ear cress) protein is Adenine phosphoribosyltransferase 1, chloroplastic (APT1).